Consider the following 3483-residue polypeptide: Nonribosomal peptide synthetase Ao415 (3483 aa).

Positions 281 to 669 (TFKKLNETSN…DVHPLIKDVV (389 aa)) are adenylation 1. Residues 775 to 851 (EVFDELSTKI…GLRDHVSGKK (77 aa)) form the Carrier 1 domain. Ser812 bears the O-(pantetheine 4'-phosphoryl)serine mark. The tract at residues 886–1297 (ANVLPCSPMQ…YCLLHMLQNQ (412 aa)) is condensation 1. Residues 1363 to 1758 (TYRQFDDMGN…SADKDVAEIV (396 aa)) form an adenylation 2 region. The Carrier 2 domain maps to 1865–1941 (EELSETEKVI…SLAKALSSAN (77 aa)). Ser1901 carries the post-translational modification O-(pantetheine 4'-phosphoryl)serine. The segment at 1981 to 2379 (IKPCTPLQEG…LLKNPEQEVA (399 aa)) is condensation 2. One can recognise a Carrier 3 domain in the interval 2412–2485 (TEAAVSIRRE…RMVVYLSSTK (74 aa)). Ser2446 is modified (O-(pantetheine 4'-phosphoryl)serine). The tract at residues 2520–2917 (ESILPTTPLQ…MLQKIIGNPL (398 aa)) is condensation 3. In terms of domain architecture, Carrier 4 spans 2954-3030 (DNYQNLERQV…KICLFLDKKQ (77 aa)). At Ser2991 the chain carries O-(pantetheine 4'-phosphoryl)serine. The interval 3084–3368 (SEGRIFLPTF…VQEDLLKIST (285 aa)) is condensation 4.

The protein belongs to the NRP synthetase family.

The protein operates within siderophore biosynthesis. In terms of biological role, nonribosomal peptide synthetase; part of the gene cluster that mediates the biosynthesis of desferriferrichrome that chelates Fe(3+) to form ferrichrome. Fe(3+) is a key factor for induction of trap formation and the fungus uses the iron chelating desferriferrichrome to sequester Fe(3+) to inhibit trap formation and increase nematicidal activity. The biosynthesis of desferriferrichrome requires the action of the L-ornithine N(5)-oxygenase (LOO) Ao414 that hydroxylates L-ornithine at N(5), resulting in the formation of N(5)-hydroxyl-L-ornithine, which is subsequently N-acetylated to yield N(5)-acetyl-N(5)-hydroxy-L-ornithine (L-AHO). L-AHO harbors one hydroxamate moiety, which is the key core responsible for chelating iron. Then, L-AHO is further condensated with glycines to form desferriferrichrome through the NRPS protein Ao415. The sequence is that of Nonribosomal peptide synthetase Ao415 from Arthrobotrys oligospora (strain ATCC 24927 / CBS 115.81 / DSM 1491) (Nematode-trapping fungus).